A 276-amino-acid chain; its full sequence is Large ribosomal subunit protein uL2 (276 aa).

The tract at residues 223–276 is disordered; it reads GVAMNPVDHPHGGGEGRGKGHHPTSPWGLPTKGYKTRRGKRPSDKFIVRRRNEA. 2 stretches are compositionally biased toward basic and acidic residues: residues 230-240 and 263-276; these read DHPHGGGEGRG and RPSD…RNEA.

Belongs to the universal ribosomal protein uL2 family. As to quaternary structure, part of the 50S ribosomal subunit. Forms a bridge to the 30S subunit in the 70S ribosome.

Its function is as follows. One of the primary rRNA binding proteins. Required for association of the 30S and 50S subunits to form the 70S ribosome, for tRNA binding and peptide bond formation. It has been suggested to have peptidyltransferase activity; this is somewhat controversial. Makes several contacts with the 16S rRNA in the 70S ribosome. The sequence is that of Large ribosomal subunit protein uL2 from Thermotoga petrophila (strain ATCC BAA-488 / DSM 13995 / JCM 10881 / RKU-1).